The primary structure comprises 329 residues: MAAKLMHAIQYSGYGGGTDALKHVEVAVPDPKSDELLLKIEAATLNPIDWKIQKGVLRPLLPRKFPTIPGTDVAGEVVQAGSAVNRFKTGDKVVAVLSHATGGALAEYAVAKENLTVARPPEVSAAEGAALPVAALTAHQALTQFANIKLDGSGERKNILITAASGGVGHYAVQLAKLGNTHVTATCGARNLDFVKGLGADEVLDYKTPEGASLTSPSGKKYDYVVHGASGIPWSTFEPNLSEAGKVIDLTPGPTAMMTFAWKKLTFSKKQLVPLLLIPKIPNFEYVVNLVKEKKLKTVIDSKHPLSKGEDAWSRIMGGHATGKIIIEP.

It belongs to the zinc-containing alcohol dehydrogenase family. Quinone oxidoreductase subfamily. Post-translationally, the transit peptide is not cleaved.

It localises to the plastid. It is found in the chloroplast inner membrane. This chain is Quinone-oxidoreductase homolog, chloroplastic (QOR), found in Spinacia oleracea (Spinach).